A 348-amino-acid polypeptide reads, in one-letter code: Putative transport protein HI_0338 (348 aa).

A run of 9 helical transmembrane segments spans residues 7–27 (LHRT…VKLA), 28–48 (AEIV…SPII), 60–80 (LAIT…VGLI), 139–159 (VLLN…VVIF), 196–216 (VIGY…GVFI), 223–243 (VQYA…PNIG), 245–265 (IIAA…GIGF), 267–287 (VAIG…PKMM), and 296–316 (LVVF…GMLL).

This sequence belongs to the autoinducer-2 exporter (AI-2E) (TC 2.A.86) family.

Its subcellular location is the cell membrane. The sequence is that of Putative transport protein HI_0338 from Haemophilus influenzae (strain ATCC 51907 / DSM 11121 / KW20 / Rd).